The chain runs to 103 residues: Histone H4.2 (103 aa).

Residues 1-14 (MTGRGKGGKGLGKG) are compositionally biased toward gly residues. The tract at residues 1-20 (MTGRGKGGKGLGKGGAKRHR) is disordered. An N6-acetyl-N6-methyllysine; alternate modification is found at K6. An N6-methyllysine; alternate mark is found at K6, K9, and K13. N6-acetyl-N6-methyllysine; alternate is present on K13. Residues 17-21 (KRHRK) mediate DNA binding. N6-glutaryllysine is present on K92.

It belongs to the histone H4 family. As to quaternary structure, the nucleosome is a histone octamer containing two molecules each of H2A, H2B, H3 and H4 assembled in one H3-H4 heterotetramer and two H2A-H2B heterodimers. The octamer wraps approximately 147 bp of DNA. Post-translationally, glutarylation at Lys-92 (H4K91glu) destabilizes nucleosomes by promoting dissociation of the H2A-H2B dimers from nucleosomes.

The protein resides in the nucleus. It localises to the chromosome. In terms of biological role, core component of nucleosome. Nucleosomes wrap and compact DNA into chromatin, limiting DNA accessibility to the cellular machineries which require DNA as a template. Histones thereby play a central role in transcription regulation, DNA repair, DNA replication and chromosomal stability. DNA accessibility is regulated via a complex set of post-translational modifications of histones, also called histone code, and nucleosome remodeling. The sequence is that of Histone H4.2 (H4.2) from Talaromyces funiculosus (Fruitlet core rot fungus).